Consider the following 2560-residue polypeptide: Plipastatin synthase subunit B (2560 aa).

The condensation 1 stretch occupies residues 7-310 (IQDIYPLSHM…NTVPVRIRSA (304 aa)). The interval 7-1042 (IQDIYPLSHM…AVKLMSLKEH (1036 aa)) is domain 1 (tyrosine-activating). Positions 496–889 (TYRQLQVRAN…QAPGVKEAAV (394 aa)) are adenylation 1. One can recognise a Carrier 1 domain in the interval 965–1040 (APRTLIEADL…SMAVKLMSLK (76 aa)). O-(pantetheine 4'-phosphoryl)serine is present on Ser-1000. Residues 1052 to 1342 (QRDVYPLSFS…NTLAMRSKPE (291 aa)) form a condensation 2 region. Positions 1052-2553 (QRDVYPLSFS…DLTLDELSEI (1502 aa)) are domain 2 (D-allo-threonine-activating). The segment at 1527–1927 (TYRDLNEKAE…QYPMIKEAAV (401 aa)) is adenylation 2. The Carrier 2 domain occupies 2006-2080 (SPRNEIETVM…ELSARVRKDV (75 aa)). O-(pantetheine 4'-phosphoryl)serine is present on Ser-2041. Residues 2088–2553 (VEGEITWTPI…DLTLDELSEI (466 aa)) form an epimerization region.

Belongs to the ATP-dependent AMP-binding enzyme family. Pantetheine 4'-phosphate serves as cofactor.

This protein is a multifunctional enzyme, able to activate and polymerize the amino acids Tyr and Thr as part of the biosynthesis of the lipopeptide antibiotic plipastatin. The Thr residue is further converted to the D-allo-isomer form. The activation sites for these amino acids consist of individual domains. This Bacillus subtilis (strain 168) protein is Plipastatin synthase subunit B (ppsB).